Consider the following 772-residue polypeptide: Semaphorin-3A (772 aa).

An N-terminal signal peptide occupies residues 1-20; the sequence is MGWFTGIACLFWGVLLTARA. Positions 31 to 514 constitute a Sema domain; the sequence is RLKLSYKEML…STAGVAQLPL (484 aa). Asn-53 carries N-linked (GlcNAc...) asparagine glycosylation. Cysteines 103 and 114 form a disulfide. Asn-125 carries N-linked (GlcNAc...) asparagine glycosylation. 4 cysteine pairs are disulfide-bonded: Cys-132–Cys-141, Cys-269–Cys-381, Cys-293–Cys-341, and Cys-517–Cys-535. Residues 579-665 enclose the Ig-like C2-type domain; the sequence is PSLEERIIYG…GFMQTLLKVT (87 aa). Asn-591 carries an N-linked (GlcNAc...) asparagine glycan. Cys-650 and Cys-723 are joined by a disulfide. Positions 729–738 are enriched in basic residues; it reads RDRKQRRQRP. Residues 729–772 form a disordered region; sequence RDRKQRRQRPGHSQGSSNKWKHMQESKKGRNRRTHEFERAPRSV. A compositionally biased stretch (basic and acidic residues) spans 750–772; it reads HMQESKKGRNRRTHEFERAPRSV.

Belongs to the semaphorin family. In terms of assembly, interacts with PXND1.

Its subcellular location is the secreted. Its function is as follows. Plays a role in growth cones guidance. May function to pattern sensory projections by selectively repelling axons that normally terminate dorsally. Involved in the development of the olfactory system and in neuronal control of puberty. The polypeptide is Semaphorin-3A (Sema3a) (Mus musculus (Mouse)).